A 289-amino-acid chain; its full sequence is Polyamine aminopropyltransferase (289 aa).

The region spanning threonine 5–aspartate 238 is the PABS domain. Glutamine 33 contributes to the S-methyl-5'-thioadenosine binding site. The spermidine site is built by histidine 64 and aspartate 88. S-methyl-5'-thioadenosine-binding positions include glutamate 108 and aspartate 140 to glycine 141. Catalysis depends on aspartate 158, which acts as the Proton acceptor. Aspartate 158–aspartate 161 is a binding site for spermidine. Residue proline 165 participates in S-methyl-5'-thioadenosine binding.

Belongs to the spermidine/spermine synthase family. As to quaternary structure, homodimer or homotetramer.

The protein localises to the cytoplasm. It catalyses the reaction S-adenosyl 3-(methylsulfanyl)propylamine + putrescine = S-methyl-5'-thioadenosine + spermidine + H(+). Its pathway is amine and polyamine biosynthesis; spermidine biosynthesis; spermidine from putrescine: step 1/1. Functionally, catalyzes the irreversible transfer of a propylamine group from the amino donor S-adenosylmethioninamine (decarboxy-AdoMet) to putrescine (1,4-diaminobutane) to yield spermidine. In Enterobacter sp. (strain 638), this protein is Polyamine aminopropyltransferase.